The following is a 400-amino-acid chain: Nicotinate phosphoribosyltransferase (400 aa).

Phosphohistidine; by autocatalysis is present on H220.

Belongs to the NAPRTase family. Post-translationally, transiently phosphorylated on a His residue during the reaction cycle. Phosphorylation strongly increases the affinity for substrates and increases the rate of nicotinate D-ribonucleotide production. Dephosphorylation regenerates the low-affinity form of the enzyme, leading to product release.

The enzyme catalyses nicotinate + 5-phospho-alpha-D-ribose 1-diphosphate + ATP + H2O = nicotinate beta-D-ribonucleotide + ADP + phosphate + diphosphate. It functions in the pathway cofactor biosynthesis; NAD(+) biosynthesis; nicotinate D-ribonucleotide from nicotinate: step 1/1. Its function is as follows. Catalyzes the synthesis of beta-nicotinate D-ribonucleotide from nicotinate and 5-phospho-D-ribose 1-phosphate at the expense of ATP. This chain is Nicotinate phosphoribosyltransferase, found in Escherichia fergusonii (strain ATCC 35469 / DSM 13698 / CCUG 18766 / IAM 14443 / JCM 21226 / LMG 7866 / NBRC 102419 / NCTC 12128 / CDC 0568-73).